A 318-amino-acid polypeptide reads, in one-letter code: Na(+)-translocating NADH-quinone reductase subunit C (318 aa).

Residues 13 to 33 (WYIILFIFVLSLVAGTLLSSV) traverse the membrane as a helical segment. FMN phosphoryl threonine is present on T281.

Belongs to the NqrC family. In terms of assembly, composed of six subunits; NqrA, NqrB, NqrC, NqrD, NqrE and NqrF. The cofactor is FMN.

The protein localises to the cell inner membrane. It catalyses the reaction a ubiquinone + n Na(+)(in) + NADH + H(+) = a ubiquinol + n Na(+)(out) + NAD(+). Its function is as follows. NQR complex catalyzes the reduction of ubiquinone-1 to ubiquinol by two successive reactions, coupled with the transport of Na(+) ions from the cytoplasm to the periplasm. NqrA to NqrE are probably involved in the second step, the conversion of ubisemiquinone to ubiquinol. The chain is Na(+)-translocating NADH-quinone reductase subunit C from Chlamydia muridarum (strain MoPn / Nigg).